The following is a 312-amino-acid chain: NADPH-dependent alpha-keto amide reductase (312 aa).

Residues Gly-25, Thr-26, Arg-27, and Asp-59 each coordinate NADPH. Active-site proton donor residues include Tyr-64 and His-122. Position 123 is a phosphoserine (Ser-123). 10 residues coordinate NADPH: Ser-157, Gln-179, Ser-208, Leu-210, Thr-257, Thr-258, Ser-259, Ser-260, Lys-261, and Arg-264.

Belongs to the aldo/keto reductase family. In terms of assembly, monomer. Post-translationally, the N-terminus is blocked.

Its subcellular location is the cytoplasm. It localises to the nucleus. Its function is as follows. Reduces aromatic alpha-keto amides, aliphatic and aromatic alpha-keto esters, but not beta-keto esters. This is NADPH-dependent alpha-keto amide reductase from Saccharomyces cerevisiae (strain ATCC 204508 / S288c) (Baker's yeast).